Here is a 456-residue protein sequence, read N- to C-terminus: tRNA modification GTPase MnmE (456 aa).

Residues R21, E85, and K124 each contribute to the (6S)-5-formyl-5,6,7,8-tetrahydrofolate site. The TrmE-type G domain maps to 220–379; it reads QLRIVLYGEP…LLDEIQKKAA (160 aa). N230 is a binding site for K(+). GTP-binding positions include 230-235, 249-255, and 274-277; these read NTGKSS, SEIPGTT, and DTAG. S234 serves as a coordination point for Mg(2+). Residues S249, I251, and T254 each coordinate K(+). T255 contributes to the Mg(2+) binding site. K456 lines the (6S)-5-formyl-5,6,7,8-tetrahydrofolate pocket.

This sequence belongs to the TRAFAC class TrmE-Era-EngA-EngB-Septin-like GTPase superfamily. TrmE GTPase family. Homodimer. Heterotetramer of two MnmE and two MnmG subunits. It depends on K(+) as a cofactor.

The protein resides in the cytoplasm. Exhibits a very high intrinsic GTPase hydrolysis rate. Involved in the addition of a carboxymethylaminomethyl (cmnm) group at the wobble position (U34) of certain tRNAs, forming tRNA-cmnm(5)s(2)U34. This is tRNA modification GTPase MnmE from Leptospira borgpetersenii serovar Hardjo-bovis (strain JB197).